A 229-amino-acid chain; its full sequence is Large ribosomal subunit protein uL1 (229 aa).

This sequence belongs to the universal ribosomal protein uL1 family. Part of the 50S ribosomal subunit.

Its function is as follows. Binds directly to 23S rRNA. The L1 stalk is quite mobile in the ribosome, and is involved in E site tRNA release. In terms of biological role, protein L1 is also a translational repressor protein, it controls the translation of the L11 operon by binding to its mRNA. This Flavobacterium psychrophilum (strain ATCC 49511 / DSM 21280 / CIP 103535 / JIP02/86) protein is Large ribosomal subunit protein uL1.